Consider the following 501-residue polypeptide: TNF receptor-associated factor 2 (501 aa).

Alanine 2 is modified (N-acetylalanine). Serine 5 bears the Phosphoserine mark. Phosphothreonine is present on threonine 7. Serine 11 bears the Phosphoserine mark. A Phosphothreonine modification is found at threonine 22. Lysine 31 participates in a covalent cross-link: Glycyl lysine isopeptide (Lys-Gly) (interchain with G-Cter in ubiquitin). The RING-type zinc finger occupies 34 to 73 (CSACRNVLRRPFQAQCGHRYCSFCLASILSSGPQNCAACV). Threonine 117 bears the Phosphothreonine; by PKC mark. 2 consecutive TRAF-type zinc fingers follow at residues 124-180 (CHEG…AHHE) and 177-233 (AHHE…EKQQ). The important for interaction with BIRC2 and BIRC3 stretch occupies residues 283-293 (ENIVCVLNREV). Residues 299 to 348 (TAEACSRQHRLDQDKIEALSSKVQQLERSIGLKDLAMADLEQKVLEMEAS) adopt a coiled-coil conformation. Residue lysine 320 forms a Glycyl lysine isopeptide (Lys-Gly) (interchain with G-Cter in ubiquitin) linkage. The region spanning 351 to 496 (DGVFIWKISD…DDAIFIKAIV (146 aa)) is the MATH domain.

It belongs to the TNF receptor-associated factor family. A subfamily. Homotrimer. Heterotrimer with TRAF1. Heterotrimer with TRAF3 (via TRAF domain). The domain containing the RING-type and the first TRAF-type zinc finger can also form homodimers (in vitro). Interacts with TNFRSF1B/TNFR2. Interacts with TNFRSF5/CD40. Interacts with TNFRSF4, TNFRSF7/CD27, TNFRSF8/CD30, TNFRSF9/CD137, TNFRSF11A/RANK, TNFRSF13B/TACI, TNFRSF14, TNFRSF16/NGFR, TNFRSF17/BCMA, TNFRSF18/AITR, TNFRSF19/TROY, TNFRSF19L/RELT and EDAR. Stimulation of TNF-alpha receptor TNFRSF1A leads to the formation of two distinct signaling complexes. Plasma membrane-bound complex I is composed of TNFRSF1A, TRADD, RIPK1, TRAF2 and BIRC2/c-IAP1 or BIRC3 which interacts with CHUCK/IKK-alpha, IKBKB/IKK-beta and IKBKG/IKK-gamma promoting cell survival. Subsequently, TRADD, RIPK1 and TRAF2 dissociate from TNFRSF1A and form cytoplasmic complex II with FADD and caspase CASP8 promoting cell apoptosis. Interacts with TRADD. Identified in a complex with TNFRSF1A, RIPK1 and IKBKB/IKK-beta. Interacts with RIPK2. Interacts with BIRC2 and BIRC3 N-terminus; a single BIRC2 or BIRC3 molecule interacts with a heterotrimer formed by TRAF1 and TRAF2, or a TRAF2 homotrimer. Identified in a complex composed of TRAF2, TRAF3, BIRC2 and BIRC3. Interacts with BIRC2; the interaction promotes BIRC2 stability. Interaction with BIRC2 and/or BIRC3 is essential for ubiquitination of IKBKE, degradation of NFKBIA and activation of NF-kappa-B. Within complex I, phosphorylated TRAF2 interacts (via 'Lys-63'-linked polyubiquitin chains) with CHUCK/IKK-alpha, IKBKB/IKK-beta, IKBKG/IKK-gamma TAB2, TAB3 and TAK1 in response to TNF-alpha stimulation. Within complex I, interacts with UXT isoform 1 (via TPQE motif); the interaction prevents the recruitment of FADD and CASP8/caspase 8 to complex I. Forms a complex composed of TNFRSF8/CD30 or TNFRSF1B/TNFR2, and TRAF1, TRAF2 and E3 ligase TRAIP. Within the complex, interacts with TRAIP; the interaction inhibits TRAF2-mediated NF-kappa B activation. Component of a complex composed of TANK and TBK1. Interacts with TRPC4AP. Interacts with MAP3K1/MEKK1, MAP3K5/ASK1 and MAP3K11/MLK3 in response to TNF-alpha stimulation; the interaction leads to JNK activation and interaction with MAP3K5 is inhibited by PRMT1. Component of a complex composed of MAP3K14/NIK BIRC3 and TRAF3; the interaction leads to BIRC2/3-mediated ubiquitination of TRAF3 upon CD40 engagement in a TRAF2-dependent manner. Interacts with MAP3K14/NIK in response to TNF-alpha stimulation; the interaction leads to NF-kappa B activation. Interacts with PEG3; the interaction may promote TRAF2-mediated NF-kappa B activation. Interacts with HIVEP3; the interaction may inhibit TNF-alpha-TRAF2-mediated NF-kappa B and JNK activation. Interacts with TANK/ITRAF; the interaction prevents interaction between TNFRSF1B/TNFR2 and TRAF2. Interacts with deubiquitinating enzyme CYLD; the interaction results in the deubiquitination and inactivation of TRAF2. Interacts with SIAH2; the interaction leads to TRAF2 ubiquitination and degradation. Interacts with E2 conjugating enzyme UBE2N/Ubc13, E3 ligase ITCH and RNF11 in response to TNF-alpha stimulation. Interacts with ubiquitin-editing enzyme TNFAIP3/A20 in response to TNF-alpha stimulation; the interaction promotes TRAF2 dissociation from UBE2N/Ubc13, ITCH, RNF11 and TAX1BP1 and prevents prolonged TRAF-2 ubiquitination. Interacts with TAX1BP1 in response to TNF-alpha stimulation; the interaction promotes TRAF2 dissociation from UBE2N/Ubc13 and TNFAIP3/A20, and prevents prolonged TRAF-2 ubiquitination. Interacts (via C-terminus) with EIF2AK2/PKR (via the kinase catalytic domain). Interacts with deubiquitinating enzyme USP48. Interacts with PTPN2; probably involved in TNF-mediated signaling. Interacts with Toll-like receptor TLR4/3 adapter TICAM1/TRIF; the interaction may promote TICAM1 ubiquitination. Interacts with kinase/endoribonuclease ERN1/IRE1 and DAB2IP in response to ER stress; the interaction requires DAB2IP. Interacts with ERN1/IRE1 and TAOK3 in response to ER stress; the interaction may promote TRAF2 phosphorylation. Interacts (via zinc fingers) with DAB2IP (via C-terminus PER domain)in response to TNF-alpha stimulation. Interacts with CASP8AP2/FLASH. Interacts with NFATC2IP; the interaction may repress IL-4 production in T cells. Interacts with kinase CDK9. Interacts with sphingosine kinase 1 SPHK1. Interacts with kinase TNIK. Interacts with TRAFD1. Interacts with DNA phosphodiesterase TDP2. Interacts with MAVS/IPS1. Interacts with CARD14. Interacts with Epstein-Barr virus LMP1/BNFL1. Interacts with GPS2. Interacts with XPNPEP3. Interacts with RIPK3. Interacts with RELL2. Interacts with LRRC19. Interacts with GAPDH; promoting TRAF2 ubiquitination. Phosphorylated at several serine residues within the first 128 amino acid residues. Phosphorylated at Thr-117 in response to signaling via TNF and TNFRSF1A. Phosphorylation at Thr-117 is required for 'Lys-63'-linked polyubiquitination, but not for 'Lys-48'-linked polyubiquitination. Phosphorylation at Thr-117 is important for interaction with IKKA and IKKB, activation of IKK and subsequent activation of NF-kappa-B. In terms of processing, undergoes both 'Lys-48'-linked and 'Lys-63'-linked polyubiquitination. Polyubiquitinated via 'Lys-63'-linked ubiquitin in response to TNF signaling; this requires prior phosphorylation at Thr-117. 'Lys-63'-linked polyubiquitination promotes TRAF2-mediated activation of NF-kappa-B. Can be polyubiquitinated at several Lys residues via 'Lys-48'-linked ubiquitin chains in response to TNF signaling, leading to proteasomal degradation. Autoubiquitinated, leading to its subsequent proteasomal degradation. Polyubiquitinated by BIRC2 and SIAH2, leading to its subsequent proteasomal degradation. Deubiquitinated by CYLD, a protease that specifically cleaves 'Lys-63'-linked polyubiquitin chains. Ubiquination is inhibited by LRRC19; inhibits proteasomal degradation. Ubiquitinated at Lys-320 by the SCF(FBXL2) complex, leading to its degradation by the proteasome. Ubiquitinated by E3 ubiquitin-protein ligase complex containing FBXO7; leading to repression of NF-kappa-B signaling.

Its subcellular location is the cytoplasm. The enzyme catalyses S-ubiquitinyl-[E2 ubiquitin-conjugating enzyme]-L-cysteine + [acceptor protein]-L-lysine = [E2 ubiquitin-conjugating enzyme]-L-cysteine + N(6)-ubiquitinyl-[acceptor protein]-L-lysine.. It participates in protein modification; protein ubiquitination. Has very low E3 ubiquitin ligase activity in the absence of sphingosine-1-phosphate. E3 ubiquitin ligase activity is strongly activated by cytoplasmic sphingosine-1-phosphate. Its function is as follows. E3 ubiquitin-protein ligase that regulates activation of NF-kappa-B and JNK and plays a central role in the regulation of cell survival and apoptosis. Catalyzes 'Lys-63'-linked ubiquitination of target proteins, such as BIRC3, IKBKE, MLST8, RIPK1 and TICAM1. Is an essential constituent of several E3 ubiquitin-protein ligase complexes, where it promotes the ubiquitination of target proteins by bringing them into contact with other E3 ubiquitin ligases. Regulates BIRC2 and BIRC3 protein levels by inhibiting their autoubiquitination and subsequent degradation; this does not depend on the TRAF2 RING-type zinc finger domain. Plays a role in mediating activation of NF-kappa-B by EIF2AK2/PKR. In complex with BIRC2 or BIRC3, promotes ubiquitination of IKBKE. Acts as a regulator of mTORC1 and mTORC2 assembly by mediating 'Lys-63'-linked ubiquitination of MLST8, thereby inhibiting formation of the mTORC2 complex, while facilitating assembly of the mTORC1 complex. Required for normal antibody isotype switching from IgM to IgG. The polypeptide is TNF receptor-associated factor 2 (Homo sapiens (Human)).